A 315-amino-acid polypeptide reads, in one-letter code: tRNA U34 carboxymethyltransferase (315 aa).

Carboxy-S-adenosyl-L-methionine-binding positions include K79, W93, K98, G117, 142–144 (DPS), 169–170 (VE), Y193, and R307.

This sequence belongs to the class I-like SAM-binding methyltransferase superfamily. CmoB family. In terms of assembly, homotetramer.

The catalysed reaction is carboxy-S-adenosyl-L-methionine + 5-hydroxyuridine(34) in tRNA = 5-carboxymethoxyuridine(34) in tRNA + S-adenosyl-L-homocysteine + H(+). Its function is as follows. Catalyzes carboxymethyl transfer from carboxy-S-adenosyl-L-methionine (Cx-SAM) to 5-hydroxyuridine (ho5U) to form 5-carboxymethoxyuridine (cmo5U) at position 34 in tRNAs. This is tRNA U34 carboxymethyltransferase from Helicobacter hepaticus (strain ATCC 51449 / 3B1).